A 179-amino-acid chain; its full sequence is Translationally-controlled tumor protein homolog (179 aa).

In terms of domain architecture, TCTP spans methionine 1–valine 179.

Belongs to the TCTP family.

The protein localises to the cytoplasm. Its subcellular location is the cytoskeleton. Involved in protein synthesis. Involved in microtubule stabilization. Involved in osmoadaptation. The protein is Translationally-controlled tumor protein homolog of Emericella nidulans (strain FGSC A4 / ATCC 38163 / CBS 112.46 / NRRL 194 / M139) (Aspergillus nidulans).